The following is a 449-amino-acid chain: 3-phosphoshikimate 1-carboxyvinyltransferase (449 aa).

The tract at residues 1–30 (MSHDSSPQPLTAAPGAPLRGRLRPPGDKSI) is disordered. Positions 28, 29, and 33 each coordinate 3-phosphoshikimate. Lys28 serves as a coordination point for phosphoenolpyruvate. Residues Gly101 and Arg129 each contribute to the phosphoenolpyruvate site. Residues Ser175, Gln177, Asp330, and Lys357 each contribute to the 3-phosphoshikimate site. A phosphoenolpyruvate-binding site is contributed by Gln177. Catalysis depends on Asp330, which acts as the Proton acceptor. Positions 361 and 405 each coordinate phosphoenolpyruvate.

The protein belongs to the EPSP synthase family. Monomer.

The protein localises to the cytoplasm. It catalyses the reaction 3-phosphoshikimate + phosphoenolpyruvate = 5-O-(1-carboxyvinyl)-3-phosphoshikimate + phosphate. It participates in metabolic intermediate biosynthesis; chorismate biosynthesis; chorismate from D-erythrose 4-phosphate and phosphoenolpyruvate: step 6/7. Its function is as follows. Catalyzes the transfer of the enolpyruvyl moiety of phosphoenolpyruvate (PEP) to the 5-hydroxyl of shikimate-3-phosphate (S3P) to produce enolpyruvyl shikimate-3-phosphate and inorganic phosphate. The chain is 3-phosphoshikimate 1-carboxyvinyltransferase from Methylobacterium radiotolerans (strain ATCC 27329 / DSM 1819 / JCM 2831 / NBRC 15690 / NCIMB 10815 / 0-1).